The following is a 284-amino-acid chain: MTIVNLAAYHFVSLDANEQWRPLVTARCNELGLRGTILLAPEGINLFIAGTREATDAFIAYIRHDPLFEGKFATLQFKESLSDSQPFRRMLVRLKREIITMKKPAIKPELGRAPFVDARTLKAWLDRGHDDAGRPVVMLDTRNAFEVDVGTFDNALDYRIDKFSEFPEVIDANRADLEGKTVVSFCTGGIRCEKAAIHMKEIGIDNVYQLEGGILKYFEEVGGAHYHGDCFVFDYRTALNPQLQPTENVTCFACRAVVTPEAQQSPSYVPGKSCPACAQAASAA.

One can recognise a Rhodanese domain in the interval 132 to 226; that stretch reads AGRPVVMLDT…YFEEVGGAHY (95 aa). The active-site Cysteine persulfide intermediate is Cys186.

The protein belongs to the TrhO family.

The enzyme catalyses uridine(34) in tRNA + AH2 + O2 = 5-hydroxyuridine(34) in tRNA + A + H2O. Its function is as follows. Catalyzes oxygen-dependent 5-hydroxyuridine (ho5U) modification at position 34 in tRNAs. The sequence is that of tRNA uridine(34) hydroxylase from Burkholderia orbicola (strain MC0-3).